The following is a 118-amino-acid chain: 5-hydroxyisourate hydrolase (118 aa).

Residues His7, Arg46, and Tyr115 each coordinate substrate.

This sequence belongs to the transthyretin family. 5-hydroxyisourate hydrolase subfamily. As to quaternary structure, homotetramer.

It catalyses the reaction 5-hydroxyisourate + H2O = 5-hydroxy-2-oxo-4-ureido-2,5-dihydro-1H-imidazole-5-carboxylate + H(+). Its function is as follows. Catalyzes the hydrolysis of 5-hydroxyisourate (HIU) to 2-oxo-4-hydroxy-4-carboxy-5-ureidoimidazoline (OHCU). This Brucella suis biovar 1 (strain 1330) protein is 5-hydroxyisourate hydrolase.